A 263-amino-acid polypeptide reads, in one-letter code: 5'-nucleotidase SurE (263 aa).

The a divalent metal cation site is built by Asp-8, Asp-9, Ser-43, and Asn-96.

It belongs to the SurE nucleotidase family. Requires a divalent metal cation as cofactor.

The protein localises to the cytoplasm. It carries out the reaction a ribonucleoside 5'-phosphate + H2O = a ribonucleoside + phosphate. In terms of biological role, nucleotidase that shows phosphatase activity on nucleoside 5'-monophosphates. The sequence is that of 5'-nucleotidase SurE from Jannaschia sp. (strain CCS1).